We begin with the raw amino-acid sequence, 447 residues long: Probable glycine dehydrogenase (decarboxylating) subunit 1 (447 aa).

This sequence belongs to the GcvP family. N-terminal subunit subfamily. The glycine cleavage system is composed of four proteins: P, T, L and H. In this organism, the P 'protein' is a heterodimer of two subunits.

The enzyme catalyses N(6)-[(R)-lipoyl]-L-lysyl-[glycine-cleavage complex H protein] + glycine + H(+) = N(6)-[(R)-S(8)-aminomethyldihydrolipoyl]-L-lysyl-[glycine-cleavage complex H protein] + CO2. In terms of biological role, the glycine cleavage system catalyzes the degradation of glycine. The P protein binds the alpha-amino group of glycine through its pyridoxal phosphate cofactor; CO(2) is released and the remaining methylamine moiety is then transferred to the lipoamide cofactor of the H protein. The protein is Probable glycine dehydrogenase (decarboxylating) subunit 1 of Azorhizobium caulinodans (strain ATCC 43989 / DSM 5975 / JCM 20966 / LMG 6465 / NBRC 14845 / NCIMB 13405 / ORS 571).